The sequence spans 313 residues: MNTFSQVWVFSDTPSRLPELMNGAQALANQINTFVLNDADGTQAIQLGANHVWKLSGKPDERMIEDYAGVMADTIRQHGADGLVLLPNTRRGKLLAAKLGYRLNAAVSNDASAVSVQDGKATVKHMVYGGLAIGEERIATPYAVLTISSGTFDAAQPDASRTGETHTVEWQAPAVAITRTATQARQSNSVDLDKARLVVSVGRGIGSKENIALAEQLCKAIGAELACSRPVAENEKWMEHERYVGISNLMLKPELYLAVGISGQIQHMVGANASQTIFAINKDKNAPIFQYADYGIVGDAVKILPALTVALAR.

255–283 (LYLAVGISGQIQHMVGANASQTIFAINKD) contacts FAD.

It belongs to the ETF alpha-subunit/FixB family. Heterodimer of FixA and FixB.

The protein operates within amine and polyamine metabolism; carnitine metabolism. In terms of biological role, required for anaerobic carnitine reduction. May bring reductant to CaiA. The protein is Protein FixB of Escherichia coli O1:K1 / APEC.